The chain runs to 329 residues: Ribosomal protein L11 methyltransferase (329 aa).

S-adenosyl-L-methionine is bound by residues Thr177, Gly198, Asp220, and Asn264.

It belongs to the methyltransferase superfamily. PrmA family.

It is found in the cytoplasm. The catalysed reaction is L-lysyl-[protein] + 3 S-adenosyl-L-methionine = N(6),N(6),N(6)-trimethyl-L-lysyl-[protein] + 3 S-adenosyl-L-homocysteine + 3 H(+). Functionally, methylates ribosomal protein L11. The sequence is that of Ribosomal protein L11 methyltransferase from Helicobacter acinonychis (strain Sheeba).